A 373-amino-acid polypeptide reads, in one-letter code: Maltose/maltodextrin import ATP-binding protein MalK (373 aa).

Positions 4 to 234 (VTLKNVCKAY…PQNRFVAGFI (231 aa)) constitute an ABC transporter domain. 36 to 43 (GPSGCGKS) serves as a coordination point for ATP.

The protein belongs to the ABC transporter superfamily. Maltooligosaccharide importer (TC 3.A.1.1.1) family. The complex is composed of two ATP-binding proteins (MalK), two transmembrane proteins (MalG and MalK) and a solute-binding protein (MalE).

Its subcellular location is the cell inner membrane. The enzyme catalyses D-maltose(out) + ATP + H2O = D-maltose(in) + ADP + phosphate + H(+). Its function is as follows. Part of the ABC transporter complex MalEFGK involved in maltose/maltodextrin import. Responsible for energy coupling to the transport system. The polypeptide is Maltose/maltodextrin import ATP-binding protein MalK (Vibrio cholerae serotype O1 (strain ATCC 39315 / El Tor Inaba N16961)).